The following is a 75-amino-acid chain: Exodeoxyribonuclease 7 small subunit (75 aa).

It belongs to the XseB family. As to quaternary structure, heterooligomer composed of large and small subunits.

It localises to the cytoplasm. It catalyses the reaction Exonucleolytic cleavage in either 5'- to 3'- or 3'- to 5'-direction to yield nucleoside 5'-phosphates.. Its function is as follows. Bidirectionally degrades single-stranded DNA into large acid-insoluble oligonucleotides, which are then degraded further into small acid-soluble oligonucleotides. This chain is Exodeoxyribonuclease 7 small subunit, found in Citrifermentans bemidjiense (strain ATCC BAA-1014 / DSM 16622 / JCM 12645 / Bem) (Geobacter bemidjiensis).